The following is a 427-amino-acid chain: Enolase (427 aa).

Glutamine 162 is a binding site for (2R)-2-phosphoglycerate. Glutamate 206 serves as the catalytic Proton donor. Mg(2+)-binding residues include aspartate 243, glutamate 286, and aspartate 313. Positions 338, 367, 368, and 389 each coordinate (2R)-2-phosphoglycerate. The Proton acceptor role is filled by lysine 338.

The protein belongs to the enolase family. It depends on Mg(2+) as a cofactor.

Its subcellular location is the cytoplasm. The protein resides in the secreted. It is found in the cell surface. The catalysed reaction is (2R)-2-phosphoglycerate = phosphoenolpyruvate + H2O. The protein operates within carbohydrate degradation; glycolysis; pyruvate from D-glyceraldehyde 3-phosphate: step 4/5. In terms of biological role, catalyzes the reversible conversion of 2-phosphoglycerate (2-PG) into phosphoenolpyruvate (PEP). It is essential for the degradation of carbohydrates via glycolysis. The sequence is that of Enolase from Methanopyrus kandleri (strain AV19 / DSM 6324 / JCM 9639 / NBRC 100938).